We begin with the raw amino-acid sequence, 797 residues long: Cleavage factor two protein 2 (797 aa).

2 disordered regions span residues 519–557 and 677–703; these read ENDS…EVPS and PSEE…KKEE. Residues 684–703 are compositionally biased toward basic and acidic residues; that stretch reads KEEVEKKDGDKERNEEKKEE.

In terms of assembly, component of the cleavage and polyadenylation factor (CPF) complex, which is composed of cft1, cft2, ysh1, pta1, swd2, pfs2, dis2, yth1, ssu72, and fip1.

Its subcellular location is the nucleus. Functionally, RNA-binding component of the cleavage and polyadenylation factor (CPF) complex, which plays a key role in polyadenylation-dependent pre-mRNA 3'-end formation and cooperates with cleavage factors including the CFIA complex and NAB4/CFIB. May be involved in poly(A)-site recognition. May be involved in the association of the CPF, CPFIA and RNA polymerase II complexes. This Schizosaccharomyces pombe (strain 972 / ATCC 24843) (Fission yeast) protein is Cleavage factor two protein 2 (cft2).